The sequence spans 461 residues: ATP-dependent protease ATPase subunit HslU (461 aa).

ATP is bound by residues Ile18 and 60-65 (GVGKTE). The segment at 157-178 (EGSSVKPEPTAQQKESRQKMRK) is disordered. Residues Asp273, Glu339, and Arg411 each contribute to the ATP site.

It belongs to the ClpX chaperone family. HslU subfamily. In terms of assembly, a double ring-shaped homohexamer of HslV is capped on each side by a ring-shaped HslU homohexamer. The assembly of the HslU/HslV complex is dependent on binding of ATP.

It localises to the cytoplasm. ATPase subunit of a proteasome-like degradation complex; this subunit has chaperone activity. The binding of ATP and its subsequent hydrolysis by HslU are essential for unfolding of protein substrates subsequently hydrolyzed by HslV. HslU recognizes the N-terminal part of its protein substrates and unfolds these before they are guided to HslV for hydrolysis. In Magnetococcus marinus (strain ATCC BAA-1437 / JCM 17883 / MC-1), this protein is ATP-dependent protease ATPase subunit HslU.